The following is a 311-amino-acid chain: GPN-loop GTPase 2 (311 aa).

GTP is bound at residue 20–25 (GSGKTT). Positions 77-79 (GPN) match the Gly-Pro-Asn (GPN)-loop; involved in dimer interface motif. Residue 179 to 182 (SKMD) coordinates GTP.

The protein belongs to the GPN-loop GTPase family. Heterodimers with gpn1 or gpn3. Binds to RNA polymerase II (RNAPII).

Small GTPase required for proper localization of RNA polymerase II and III (RNAPII and RNAPIII). May act at an RNAP assembly step prior to nuclear import. The chain is GPN-loop GTPase 2 from Danio rerio (Zebrafish).